The chain runs to 907 residues: Clumping factor B (907 aa).

The N-terminal stretch at 1–44 (MKKRIDYLSNKQNKYSIRRFTVGTTSVIVGATILFGIGNHQAQA) is a signal peptide. The YSIRK-G/S signaling motif signature appears at 15–26 (YSIRRFTVGTTS). Polar residues-rich tracts occupy residues 44–61 (ASEQSNDTTQSSKNNASA) and 68–101 (MIETPQLNTTANDTSDISANTNSANVDSTAKPMS). A disordered region spans residues 44–191 (ASEQSNDTTQ…AQGTSKPSVR (148 aa)). The ligand binding A region stretch occupies residues 45–542 (SEQSNDTTQS…GSADGDSAVN (498 aa)). Positions 102 to 119 (TQTSNTTTTEPASTNETP) are enriched in low complexity. Residues 134–189 (QDQTVPQEANSQVDNKTTNDANSIATNSELKNPQTLDLPQSSPQTISNAQGTSKPS) are compositionally biased toward polar residues. The MIDAS-like motif motif lies at 272–276 (DYSNS). The segment at 530–879 (YGGGSADGDS…ETGDKSENTN (350 aa)) is disordered. The span at 545–555 (DPTPGPPVDPE) shows a compositional bias: pro residues. The segment covering 556–831 (PSPDPEPEPS…SDSDSDSDSD (276 aa)) has biased composition (acidic residues). Residues 835–846 (RVTPPNNEQKAP) are compositionally biased toward polar residues. Positions 863-876 (HKTDALPETGDKSE) are enriched in basic and acidic residues. Residues 868–872 (LPETG) carry the LPXTG sorting signal motif. T871 is subject to Pentaglycyl murein peptidoglycan amidated threonine. Positions 872–907 (GDKSENTNATLFGAMMALLGSLLLFRKRKQDHKEKA) are cleaved as a propeptide — removed by sortase.

This sequence belongs to the serine-aspartate repeat-containing protein (SDr) family. Post-translationally, proteolytically cleaved by aureolysin (aur). This cleavage leads to the inactivation of ClfB.

The protein localises to the secreted. Its subcellular location is the cell wall. Cell surface-associated protein implicated in virulence by promoting bacterial attachment to both alpha- and beta-chains of human fibrinogen and inducing the formation of bacterial clumps. The polypeptide is Clumping factor B (clfB) (Staphylococcus aureus (strain MW2)).